Consider the following 335-residue polypeptide: Galactosylgalactosylxylosylprotein 3-beta-glucuronosyltransferase 1 (335 aa).

Residues 1–6 (MPKRRD) lie on the Cytoplasmic side of the membrane. Residues 3-5 (KRR) are essential for transport from endoplasmic reticulum to Golgi apparatus and interaction with SAR1A. A helical; Signal-anchor for type II membrane protein membrane pass occupies residues 7–27 (ILAIVLIVLPWTLLVTVWHQS). At 28 to 335 (TIAPLLTTHK…KGFTDPTVEI (308 aa)) the chain is on the lumenal side. Residue 92–94 (PTY) coordinates UDP-alpha-D-glucuronate. Phosphothreonine is present on residues Thr104 and Thr109. Asp123 serves as a coordination point for UDP-alpha-D-glucuronate. An N-linked (GlcNAc...) asparagine glycan is attached at Asn141. 2 residues coordinate UDP-alpha-D-glucuronate: Arg166 and Arg171. Asn185 carries an N-linked (GlcNAc...) asparagine glycan. 196-198 (DDD) serves as a coordination point for UDP-alpha-D-glucuronate. Asp198 is a Mn(2+) binding site. The interaction with galactose moiety of substrate glycoprotein stretch occupies residues 246–255 (FDPHRPFAID). Residue Glu285 is the Proton donor/acceptor of the active site. An N-linked (GlcNAc...) asparagine glycan is attached at Asn304. UDP-alpha-D-glucuronate is bound at residue 312 to 314 (HTR).

Belongs to the glycosyltransferase 43 family. In terms of assembly, homodimer. Interacts with SAR1A. Mn(2+) serves as cofactor. Post-translationally, the soluble form derives from the membrane form by proteolytic processing.

Its subcellular location is the golgi apparatus membrane. The protein resides in the secreted. It catalyses the reaction 3-O-(beta-D-galactosyl-(1-&gt;3)-beta-D-galactosyl-(1-&gt;4)-beta-D-xylosyl)-L-seryl-[protein] + UDP-alpha-D-glucuronate = 3-O-(beta-D-GlcA-(1-&gt;3)-beta-D-Gal-(1-&gt;3)-beta-D-Gal-(1-&gt;4)-beta-D-Xyl)-L-seryl-[protein] + UDP + H(+). It participates in protein modification; protein glycosylation. Functionally, involved in the biosynthesis of L2/HNK-1 carbohydrate epitope on glycoproteins. Can also play a role in glycosaminoglycan biosynthesis. Substrates include asialo-orosomucoid (ASOR), asialo-fetuin, and asialo-neural cell adhesion molecule. Requires sphingomyelin for activity: stearoyl-sphingomyelin was the most effective, followed by palmitoyl-sphingomyelin and lignoceroyl-sphingomyelin. Activity was demonstrated only for sphingomyelin with a saturated fatty acid and not for that with an unsaturated fatty acid, regardless of the length of the acyl group. This Canis lupus familiaris (Dog) protein is Galactosylgalactosylxylosylprotein 3-beta-glucuronosyltransferase 1.